The chain runs to 462 residues: NAD-capped RNA hydrolase NUDT12 (462 aa).

The residue at position 10 (lysine 10) is an N6-succinyllysine. ANK repeat units lie at residues 11 to 40, 45 to 74, and 78 to 98; these read EMIS…SLLN, NGWT…DRSL, and ARQT…ANLL. Residue lysine 185 is modified to N6-succinyllysine. The Zn(2+) site is built by cysteine 284 and cysteine 287. An N6-succinyllysine modification is found at lysine 292. 2 residues coordinate Zn(2+): cysteine 302 and cysteine 307. Residues tyrosine 318, 354–356, glutamate 370, glutamate 374, and glutamate 415 contribute to the substrate site; that span reads AGF. In terms of domain architecture, Nudix hydrolase spans 319-453; that stretch reads PRVDPVVIMQ…SRAIAHQLIK (135 aa). 4 residues coordinate Mg(2+): alanine 354, glutamate 370, glutamate 374, and glutamate 415. The Nudix box motif lies at 355-376; it reads GFIEPGETIEDAVRREVEEESG. The short motif at 460-462 is the Microbody targeting signal element; it reads PNL.

Belongs to the Nudix hydrolase family. NudC subfamily. In terms of assembly, homodimer. Homodimerization is essential for its catalytic activity and protein stability. Interacts (via ANK repeats) with BLMH. The cofactor is Mg(2+). It depends on Zn(2+) as a cofactor. In terms of tissue distribution, expressed abundantly in the liver and kidney.

The protein localises to the cytoplasm. The protein resides in the peroxisome. It is found in the cytoplasmic granule. It carries out the reaction a 5'-end NAD(+)-phospho-ribonucleoside in mRNA + H2O = a 5'-end phospho-adenosine-phospho-ribonucleoside in mRNA + beta-nicotinamide D-ribonucleotide + 2 H(+). It catalyses the reaction NAD(+) + H2O = beta-nicotinamide D-ribonucleotide + AMP + 2 H(+). The enzyme catalyses NADH + H2O = reduced beta-nicotinamide D-ribonucleotide + AMP + 2 H(+). The catalysed reaction is NADPH + H2O = reduced beta-nicotinamide D-ribonucleotide + adenosine 2',5'-bisphosphate + 2 H(+). In terms of biological role, mRNA decapping enzyme that specifically removes the nicotinamide adenine dinucleotide (NAD) cap from a subset of mRNAs by hydrolyzing the diphosphate linkage to produce nicotinamide mononucleotide (NMN) and 5' monophosphate mRNA. The NAD-cap is present at the 5'-end of some RNAs; in contrast to the canonical N7 methylguanosine (m7G) cap, the NAD cap promotes mRNA decay. Preferentially acts on NAD-capped transcripts in response to nutrient stress. Also acts on free nicotinamide adenine dinucleotide molecules: hydrolyzes NAD(H) into NMN(H) and AMP, and NADPH into NMNH and 2',5'-ADP. May act to regulate the concentration of peroxisomal nicotinamide nucleotide cofactors required for oxidative metabolism in this organelle. Regulates the levels of circadian clock components PER1, PER2, PER3 and CRY2 in the liver. The sequence is that of NAD-capped RNA hydrolase NUDT12 from Mus musculus (Mouse).